Reading from the N-terminus, the 404-residue chain is N-acetylglucosamine-6-phosphate deacetylase (404 aa).

Residue glutamate 143 participates in a divalent metal cation binding. 154–155 (AH) serves as a coordination point for substrate. The a divalent metal cation site is built by histidine 211 and histidine 232. Substrate-binding positions include 235 to 236 (NA), arginine 243, and 269 to 272 (DGIH). The active-site Proton donor/acceptor is the aspartate 294. Residue 328–330 (LSG) coordinates substrate.

It belongs to the metallo-dependent hydrolases superfamily. NagA family. The cofactor is a divalent metal cation.

The catalysed reaction is N-acetyl-D-glucosamine 6-phosphate + H2O = D-glucosamine 6-phosphate + acetate. It functions in the pathway amino-sugar metabolism; N-acetylneuraminate degradation. Functionally, hydrolyzes the N-glycolyl group from N-glycolylglucosamine 6-phosphate (GlcNGc-6-P) in the N-glycolylneuraminic acid (Neu5Gc) degradation pathway. In Danio rerio (Zebrafish), this protein is N-acetylglucosamine-6-phosphate deacetylase (amdhd2).